The primary structure comprises 173 residues: MDHDKTGCQSPPEGPKLCTNNCGFFGSAATMNMCSKCHKDMLFQQEQGAKFASAVSGTSSSSNIIKETFTAALVDIETKSVEPMTVSVQPSSVQVVAEVVAPEEAAKPKGPSRCTTCNKRVGLTGFKCRCGSLFCGTHRYADVHDCSFNYHAAAQEAIAKANPVVKAEKLDKI.

The segment at 12 to 46 (PEGPKLCTNNCGFFGSAATMNMCSKCHKDMLFQQE) adopts an A20-type zinc-finger fold. Zn(2+) contacts are provided by C18, C22, C34, C37, C114, C117, C128, C130, C135, H138, H144, and C146. The AN1-type zinc finger occupies 108 to 154 (PKGPSRCTTCNKRVGLTGFKCRCGSLFCGTHRYADVHDCSFNYHAAA).

May be involved in environmental stress response. The sequence is that of Zinc finger A20 and AN1 domain-containing stress-associated protein 2 (SAP2) from Arabidopsis thaliana (Mouse-ear cress).